We begin with the raw amino-acid sequence, 130 residues long: Biotin carboxyl carrier protein (130 aa).

The disordered stretch occupies residues 20–64 (EISESSVPAATPITPTTENTRAASDQKQQSQTPSPAATASAANTM). Residues 23–46 (ESSVPAATPITPTTENTRAASDQK) show a composition bias toward polar residues. Residues 47–64 (QQSQTPSPAATASAANTM) show a composition bias toward low complexity. Positions 55-130 (AATASAANTM…NAGDNLITIA (76 aa)) constitute a Biotinyl-binding domain. Position 96 is an N6-biotinyllysine (Lys-96).

The polypeptide is Biotin carboxyl carrier protein (bcc) (Streptococcus mutans serotype c (strain ATCC 700610 / UA159)).